The following is a 237-amino-acid chain: Uridylate kinase (237 aa).

9 to 12 (KLSG) serves as a coordination point for ATP. The tract at residues 17–22 (GSQGYG) is involved in allosteric activation by GTP. Residue Gly51 coordinates UMP. Residues Gly52 and Arg56 each coordinate ATP. UMP-binding positions include Asp71 and 132 to 139 (CGNPFFTT). Residues Thr159, Tyr165, and Asp168 each contribute to the ATP site.

It belongs to the UMP kinase family. As to quaternary structure, homohexamer.

It is found in the cytoplasm. It catalyses the reaction UMP + ATP = UDP + ADP. The protein operates within pyrimidine metabolism; CTP biosynthesis via de novo pathway; UDP from UMP (UMPK route): step 1/1. With respect to regulation, allosterically activated by GTP. Inhibited by UTP. In terms of biological role, catalyzes the reversible phosphorylation of UMP to UDP. This Synechococcus sp. (strain CC9902) protein is Uridylate kinase.